Reading from the N-terminus, the 88-residue chain is Small ribosomal subunit protein uS17 (88 aa).

It belongs to the universal ribosomal protein uS17 family. Part of the 30S ribosomal subunit.

Functionally, one of the primary rRNA binding proteins, it binds specifically to the 5'-end of 16S ribosomal RNA. The protein is Small ribosomal subunit protein uS17 of Methylorubrum extorquens (strain PA1) (Methylobacterium extorquens).